The chain runs to 155 residues: Small ribosomal subunit protein uS7 (155 aa).

It belongs to the universal ribosomal protein uS7 family. As to quaternary structure, part of the 30S ribosomal subunit. Contacts proteins S9 and S11.

In terms of biological role, one of the primary rRNA binding proteins, it binds directly to 16S rRNA where it nucleates assembly of the head domain of the 30S subunit. Is located at the subunit interface close to the decoding center, probably blocks exit of the E-site tRNA. The protein is Small ribosomal subunit protein uS7 of Pelodictyon phaeoclathratiforme (strain DSM 5477 / BU-1).